Consider the following 250-residue polypeptide: Ribosomal RNA small subunit methyltransferase J (250 aa).

S-adenosyl-L-methionine is bound by residues 96 to 97 and Asp-168; that span reads RD.

It belongs to the methyltransferase superfamily. RsmJ family.

It is found in the cytoplasm. It catalyses the reaction guanosine(1516) in 16S rRNA + S-adenosyl-L-methionine = N(2)-methylguanosine(1516) in 16S rRNA + S-adenosyl-L-homocysteine + H(+). Specifically methylates the guanosine in position 1516 of 16S rRNA. The sequence is that of Ribosomal RNA small subunit methyltransferase J from Neisseria gonorrhoeae (strain NCCP11945).